The chain runs to 205 residues: MIELRTYVFLDSLQPQLASYMATASMGFLPVPGDSSLWIEVAPGMAVHRLSDIALKASNVRLGQQIVERAYGSMVIHHRDQSDVLEAGQRILDHLQTREYDRQQCVVMWNEIIRGVTADHATLINRDNRKGSMILPGQSMFIMETEPAGYIIYAANEAEKAADVTLVEARAVGAYGRLVMCGKEGDITEAARAANEALKRLTCRS.

BMC circularly permuted domains lie at 3 to 100 and 106 to 205; these read ELRT…TREY and VVMW…TCRS. The Gates the pore motif lies at 68-69; the sequence is ER.

The protein belongs to the EutL/PduB family. As to quaternary structure, homotrimer. Forms a dimer of stacked trimers, the same faces interact. Probably forms a CsoS1-CsoS1D-CsoS2 complex.

Its subcellular location is the carboxysome. Part of the carboxysome shell, a polyhedral inclusion where RuBisCO (ribulose bisphosphate carboxylase, cbbL-cbbS) is sequestered. It may control transport of RuBisCO reactants in and out of the carboxysome. This is Carboxysome shell protein CsoS1D from Hydrogenovibrio crunogenus (strain DSM 25203 / XCL-2) (Thiomicrospira crunogena).